The primary structure comprises 254 residues: Anti-sigma-M factor RsmA (254 aa).

The Cytoplasmic portion of the chain corresponds to 1 to 112 (MSAADKDPDK…AARPHVHPVR (112 aa)). A helical membrane pass occupies residues 113–133 (MIAGAAGLCAVATAIGVGAVV). At 134-254 (DAPPPAPSAP…LLASTVVPRA (121 aa)) the chain is on the extracellular side.

As to quaternary structure, interacts with ECF RNA polymerase sigma factor SigM; this should inhibit the interaction of SigM with the RNA polymerase catalytic core. In terms of processing, probably cleaved within the membrane by Rip1 near the cytoplasmic membrane interface.

The protein resides in the cell membrane. Its function is as follows. An anti-sigma factor for extracytoplasmic function (ECF) sigma factor SigM. ECF sigma factors are held in an inactive form by an anti-sigma factor until released by regulated intramembrane proteolysis (RIP). RIP occurs when an extracytoplasmic signal triggers a concerted proteolytic cascade to transmit information and elicit cellular responses. The membrane-spanning regulatory substrate protein is first cut extracytoplasmically (site-1 protease, S1P), then within the membrane itself (site-2 protease, S2P, Rip1), while cytoplasmic proteases finish degrading the regulatory protein, liberating the sigma factor. The protein is Anti-sigma-M factor RsmA (rsmA) of Mycobacterium tuberculosis (strain ATCC 35801 / TMC 107 / Erdman).